Reading from the N-terminus, the 369-residue chain is P2X receptor B (369 aa).

Residues 1–25 lie on the Cytoplasmic side of the membrane; sequence MTIDWDSILSYNTIKVVRIRDRRLG. The helical transmembrane segment at 26–46 threads the bilayer; it reads ILHLCFLIVIVLYVVVYSAII. The Lumenal segment spans residues 47–369; sequence KKGYVTTEEP…DKLYHNIEAL (323 aa). A pore-forming motif region spans residues 283 to 296; sequence RHAIRLIFIQTGVI.

This sequence belongs to the P2X receptor family.

It is found in the contractile vacuole membrane. P2X receptors are ATP-gated ion channels that play a role in intracellular calcium signaling. Not required for the purinergic response to extracellular nucleotides. Not essential for osmoregulation. Inward currents are evoked by intracellular ATP and ATP analogs. Insensitive to the P2 receptor antagonists PPADS and suramin, and also copper ions. Inhibited by sodium ions. Permeable to chloride ions. This Dictyostelium discoideum (Social amoeba) protein is P2X receptor B (p2xB).